A 260-amino-acid polypeptide reads, in one-letter code: MISVKLVSYTNDGEKVIAIAAKMSRSRKGWDYHEKDMTDDEIETWIRDAILHGYWSVLEHSVYTFSIEEISRVASHQLVRHRIASYTQMSHRFAKPIDEYYKPIIPPSAKKRSKELVEKAYKEAYDNYYTLLESGVPEEDARYVLPNGVNTNIVVTMNARELYNFFSLRLCSRAQWEIRAIAWKMLEEVKKVHPRLFKYTGPNCIIHENFIRNENESITLEDIFKDYKLEFISQRCIEGVLRDGIKKCIINSRSVLDNIK.

Residues 2–203 form the ThyX domain; it reads ISVKLVSYTN…PRLFKYTGPN (202 aa). FAD-binding positions include serine 56, 80–82, and glutamine 88; that span reads RHR. Residues 77–80, 88–92, and arginine 142 each bind dUMP; these read QLVR and QMSHR. Residues 80 to 90 carry the ThyX motif motif; that stretch reads RHRIASYTQMS. Residues 158 to 160 and asparagine 164 each bind FAD; that span reads NAR. Arginine 169 contributes to the dUMP binding site. Arginine 169 serves as the catalytic Involved in ionization of N3 of dUMP, leading to its activation.

It belongs to the thymidylate synthase ThyX family. As to quaternary structure, homotetramer. FAD serves as cofactor.

The catalysed reaction is dUMP + (6R)-5,10-methylene-5,6,7,8-tetrahydrofolate + NADPH + H(+) = dTMP + (6S)-5,6,7,8-tetrahydrofolate + NADP(+). It functions in the pathway pyrimidine metabolism; dTTP biosynthesis. Functionally, catalyzes the reductive methylation of 2'-deoxyuridine-5'-monophosphate (dUMP) to 2'-deoxythymidine-5'-monophosphate (dTMP) while utilizing 5,10-methylenetetrahydrofolate (mTHF) as the methyl donor, and NADPH and FADH(2) as the reductant. In Saccharolobus solfataricus (strain ATCC 35092 / DSM 1617 / JCM 11322 / P2) (Sulfolobus solfataricus), this protein is Flavin-dependent thymidylate synthase.